The chain runs to 133 residues: Small ribosomal subunit protein bS6 (133 aa).

Residues 93–133 (KTAVTEPSPMMKEEPRRERRDDSAPRQERAEKKTETTEDNA) are disordered. A compositionally biased stretch (basic and acidic residues) spans 103 to 133 (MKEEPRRERRDDSAPRQERAEKKTETTEDNA).

It belongs to the bacterial ribosomal protein bS6 family.

In terms of biological role, binds together with bS18 to 16S ribosomal RNA. This is Small ribosomal subunit protein bS6 from Alteromonas mediterranea (strain DSM 17117 / CIP 110805 / LMG 28347 / Deep ecotype).